Reading from the N-terminus, the 445-residue chain is MKNVIRTPETHPLTWRLRDDKQPVWLDEYRSKNGYEGARKALTGLSPDEIVSQVKDAGLKGRGGAGFSTGLKWSLMPKDESMNIRYLLCNADEMEPGTYKDRLLMEQLPHLLVEGMLISAFALKAYRGYIFLRGEYIEAAVHLRRAIAEATEAGLLGKNIMGTGFDFELFVHTGAGRYICGEETALINSLEGRRANPRSKPPFPATSGVWGKPTCVNNVETLCNVPAILANGVEWYQNISKSKDAGTKLMGFSGRVKNPGLWELPFGTTAREILEDYAGGMRDGLKFKAWQPGGAGTDFLTEAHLDLPMEFESIGKAGSRLGTALAMAVDHEIGMVSLVRNLEEFFARESCGWCTPCRDGLPWSVKILRALERGEGQPGDIETLEQLCRFLGPGKTFCAHAPGAVEPLQSAIKYFREEFEAGIKQPFSNTHLINGIQPNLLKERW.

61–70 serves as a coordination point for NAD(+); that stretch reads GRGGAGFSTG. 174 to 221 contacts FMN; that stretch reads GAGRYICGEETALINSLEGRRANPRSKPPFPATSGVWGKPTCVNNVET. [4Fe-4S] cluster is bound by residues Cys351, Cys354, Cys357, and Cys398.

Belongs to the complex I 51 kDa subunit family. In terms of assembly, composed of 13 different subunits. Subunits NuoCD, E, F, and G constitute the peripheral sector of the complex. Requires FMN as cofactor. The cofactor is [4Fe-4S] cluster.

The enzyme catalyses a quinone + NADH + 5 H(+)(in) = a quinol + NAD(+) + 4 H(+)(out). Its function is as follows. NDH-1 shuttles electrons from NADH, via FMN and iron-sulfur (Fe-S) centers, to quinones in the respiratory chain. The immediate electron acceptor for the enzyme in this species is believed to be ubiquinone. Couples the redox reaction to proton translocation (for every two electrons transferred, four hydrogen ions are translocated across the cytoplasmic membrane), and thus conserves the redox energy in a proton gradient. In Salmonella typhimurium (strain LT2 / SGSC1412 / ATCC 700720), this protein is NADH-quinone oxidoreductase subunit F (nuoF).